We begin with the raw amino-acid sequence, 249 residues long: MRILVSNDDGFHAEGIQVLATELRKIAEVIVVAPDRNRSAASSSLTLVEPLRPRHLDNGDYCVNGTPADCVYLALNGFLSGQVDLVVSGINAGCNMGDDTIYSGTLAAALEGRHLGLPAIAVSLDGRQHYETAARVVCDLIPKLHHQLLNPREIININVPDLPFEELKGYKVCRLGYRASSAEVIKQKDPRDETIYWIGPSALPEDESEGTDFYAVKNGYVSITPIQADLTAYHSLLSLQNWLEQEFTK.

The a divalent metal cation site is built by Asp-8, Asp-9, Ser-39, and Asn-91.

This sequence belongs to the SurE nucleotidase family. A divalent metal cation is required as a cofactor.

It is found in the cytoplasm. The enzyme catalyses a ribonucleoside 5'-phosphate + H2O = a ribonucleoside + phosphate. Nucleotidase that shows phosphatase activity on nucleoside 5'-monophosphates. In Haemophilus influenzae (strain PittGG), this protein is 5'-nucleotidase SurE.